Consider the following 590-residue polypeptide: Arginine--tRNA ligase (590 aa).

A 'HIGH' region motif is present at residues 132–142 (PNTNKPLHLGH).

Belongs to the class-I aminoacyl-tRNA synthetase family. In terms of assembly, monomer.

The protein localises to the cytoplasm. The enzyme catalyses tRNA(Arg) + L-arginine + ATP = L-arginyl-tRNA(Arg) + AMP + diphosphate. This chain is Arginine--tRNA ligase, found in Treponema denticola (strain ATCC 35405 / DSM 14222 / CIP 103919 / JCM 8153 / KCTC 15104).